The sequence spans 1070 residues: Probable arabinosyltransferase C (1070 aa).

12 consecutive transmembrane segments (helical) span residues 10–32, 210–232, 247–269, 399–421, 425–442, 449–471, 512–534, 547–564, 574–596, 603–625, 645–664, and 685–707; these read IARL…TPFL, LLKT…ALHL, SRWW…WHFV, VATS…LFSG, IASI…LTIL, FGAV…LIFR, SVAR…AMSL, SRRI…MMFT, VFAG…AALR, VFAA…WWYV, TALL…FHFV, and SPIA…MAMI.

Belongs to the emb family.

It is found in the cell membrane. In terms of biological role, arabinosyl transferase responsible for the polymerization of arabinose into the arabinan of arabinogalactan. This Mycobacterium leprae (strain TN) protein is Probable arabinosyltransferase C (embC).